The sequence spans 270 residues: NAD kinase (270 aa).

Residue D57 is the Proton acceptor of the active site. NAD(+) is bound by residues 57-58 (DG), 125-126 (NE), R150, and N227.

Belongs to the NAD kinase family. A divalent metal cation serves as cofactor.

It localises to the cytoplasm. The enzyme catalyses NAD(+) + ATP = ADP + NADP(+) + H(+). Its function is as follows. Involved in the regulation of the intracellular balance of NAD and NADP, and is a key enzyme in the biosynthesis of NADP. Catalyzes specifically the phosphorylation on 2'-hydroxyl of the adenosine moiety of NAD to yield NADP. The chain is NAD kinase from Ureaplasma parvum serovar 3 (strain ATCC 700970).